We begin with the raw amino-acid sequence, 103 residues long: Large ribosomal subunit protein bL21 (103 aa).

Belongs to the bacterial ribosomal protein bL21 family. In terms of assembly, part of the 50S ribosomal subunit. Contacts protein L20.

This protein binds to 23S rRNA in the presence of protein L20. The chain is Large ribosomal subunit protein bL21 from Lactobacillus acidophilus (strain ATCC 700396 / NCK56 / N2 / NCFM).